Consider the following 431-residue polypeptide: Glucose-1-phosphate adenylyltransferase (431 aa).

Position 39 (Lys39) interacts with beta-D-fructose 1,6-bisphosphate. AMP contacts are provided by Arg40, His46, and Arg52. Alpha-D-glucose 1-phosphate-binding positions include Tyr114, Gly179, 194-195 (EK), and Ser212. Residues Glu370 and Arg386 each coordinate AMP. Residues 419–423 (REMLR) and 429–431 (QER) contribute to the beta-D-fructose 1,6-bisphosphate site.

This sequence belongs to the bacterial/plant glucose-1-phosphate adenylyltransferase family. Homotetramer.

The catalysed reaction is alpha-D-glucose 1-phosphate + ATP + H(+) = ADP-alpha-D-glucose + diphosphate. It participates in glycan biosynthesis; glycogen biosynthesis. Its activity is regulated as follows. Allosterically activated by fructose-1,6-bisphosphate (F16BP) and inhibited by AMP. Its function is as follows. Involved in the biosynthesis of ADP-glucose, a building block required for the elongation reactions to produce glycogen. Catalyzes the reaction between ATP and alpha-D-glucose 1-phosphate (G1P) to produce pyrophosphate and ADP-Glc. The protein is Glucose-1-phosphate adenylyltransferase of Salmonella typhi.